A 344-amino-acid chain; its full sequence is Heat-inducible transcription repressor HrcA (344 aa).

The protein belongs to the HrcA family.

Negative regulator of class I heat shock genes (grpE-dnaK-dnaJ and groELS operons). Prevents heat-shock induction of these operons. In Desulforudis audaxviator (strain MP104C), this protein is Heat-inducible transcription repressor HrcA.